The following is a 315-amino-acid chain: Homoserine O-succinyltransferase (315 aa).

The active-site Acyl-thioester intermediate is the Cys-142. Residues Lys-163 and Ser-192 each contribute to the substrate site. The active-site Proton acceptor is the His-235. The active site involves Glu-237. A substrate-binding site is contributed by Arg-249.

Belongs to the MetA family.

It is found in the cytoplasm. The enzyme catalyses L-homoserine + succinyl-CoA = O-succinyl-L-homoserine + CoA. It participates in amino-acid biosynthesis; L-methionine biosynthesis via de novo pathway; O-succinyl-L-homoserine from L-homoserine: step 1/1. Functionally, transfers a succinyl group from succinyl-CoA to L-homoserine, forming succinyl-L-homoserine. The sequence is that of Homoserine O-succinyltransferase from Tolumonas auensis (strain DSM 9187 / NBRC 110442 / TA 4).